A 123-amino-acid polypeptide reads, in one-letter code: U11/U12 small nuclear ribonucleoprotein 25 kDa protein (123 aa).

A Ubiquitin-like domain is found at 32 to 123 (MTVRVCKMDG…VSFIKKLRQK (92 aa)).

In terms of assembly, component of the U11/U12 snRNPs that are part of the U12-type spliceosome.

It localises to the nucleus. The chain is U11/U12 small nuclear ribonucleoprotein 25 kDa protein (Snrnp25) from Mus musculus (Mouse).